The chain runs to 196 residues: uncharacterized protein (196 aa).

Residues 15–22, 68–71, tyrosine 107, and 123–126 each bind FAD; these read SQGKFNKT, GWWM, and TWNA.

Belongs to the oxidoreductase MdaB family. FAD serves as cofactor.

This is an uncharacterized protein from Schizosaccharomyces pombe (strain 972 / ATCC 24843) (Fission yeast).